A 242-amino-acid chain; its full sequence is LexA repressor (242 aa).

Positions 26–46 (FEEMKAALNLKSKSGIHRLIS) form a DNA-binding region, H-T-H motif. Residues S163 and K201 each act as for autocatalytic cleavage activity in the active site.

This sequence belongs to the peptidase S24 family. Homodimer.

The catalysed reaction is Hydrolysis of Ala-|-Gly bond in repressor LexA.. Its function is as follows. Represses a number of genes involved in the response to DNA damage (SOS response), including recA and lexA. In the presence of single-stranded DNA, RecA interacts with LexA causing an autocatalytic cleavage which disrupts the DNA-binding part of LexA, leading to derepression of the SOS regulon and eventually DNA repair. In Granulibacter bethesdensis (strain ATCC BAA-1260 / CGDNIH1), this protein is LexA repressor.